The sequence spans 240 residues: Ribonuclease PH (240 aa).

Residues arginine 87 and 125 to 127 (GTR) each bind phosphate.

This sequence belongs to the RNase PH family. In terms of assembly, homohexameric ring arranged as a trimer of dimers.

It catalyses the reaction tRNA(n+1) + phosphate = tRNA(n) + a ribonucleoside 5'-diphosphate. Its function is as follows. Phosphorolytic 3'-5' exoribonuclease that plays an important role in tRNA 3'-end maturation. Removes nucleotide residues following the 3'-CCA terminus of tRNAs; can also add nucleotides to the ends of RNA molecules by using nucleoside diphosphates as substrates, but this may not be physiologically important. Probably plays a role in initiation of 16S rRNA degradation (leading to ribosome degradation) during starvation. This is Ribonuclease PH from Pseudomonas fluorescens (strain Pf0-1).